The chain runs to 188 residues: MKANDIKKGNVVEYNGGIYQIRDIERSSPQGRGGNVRFRFIMYSVPGGAKLDASFDADDNLPEVELLRRQSTYSYKDGEAFVFMDDEDYTPYMLDAEVIGTDAGYITDGLTGIFVQVIDDQPVAVQLPQTVTLEVVETPPELKGGTATKRPKPAKLNTGLEIMVPEYITNGERVLVNTTTGEFAGRAD.

It belongs to the elongation factor P family.

This Xanthomonas campestris pv. campestris (strain 8004) protein is Elongation factor P-like protein.